The following is a 368-amino-acid chain: mRNA export factor (368 aa).

Residues 15-34 (TSMFGSTTTDNHNPMKDIEV) are disordered. 7 WD repeats span residues 37–79 (SPDD…QTIP), 84–114 (MHTG…KMWD), 125–157 (QHDA…KFWD), 168–206 (QLPE…EFRR), 215–255 (HRCV…KDNF), 271–301 (QDIY…SFWD), and 310–346 (TSEQ…EFYN). A Phosphothreonine modification is found at Thr-229.

Belongs to the WD repeat rae1 family. In terms of assembly, interacts with NUMA1 (via N-terminal end of the coiled-coil domain); this interaction promotes spindle formation in mitosis. Interacts with NUP98. Interacts with MYCBP2. Interacts with USP11.

Its subcellular location is the cytoplasm. It localises to the nucleus. The protein resides in the cytoskeleton. It is found in the spindle pole. Plays a role in mitotic bipolar spindle formation. Binds mRNA. May function in nucleocytoplasmic transport and in directly or indirectly attaching cytoplasmic mRNPs to the cytoskeleton. The sequence is that of mRNA export factor (Rae1) from Mus musculus (Mouse).